Here is a 133-residue protein sequence, read N- to C-terminus: MLLPDFLHQRFHSRPVRDVEDTIDKFVCTVFSLQRLQTSFRSCYAVDDAFIVLFDNSFHQLQANPTGGTCNQNNLAHIPSLTDYKLFLLLLFATALISCIPSSFSALSFLATLRKRSKSEKKREKTMRNSMLP.

Residues 91-113 (LFATALISCIPSSFSALSFLATL) form a helical membrane-spanning segment.

It is found in the membrane. This is an uncharacterized protein from Saccharomyces cerevisiae (strain ATCC 204508 / S288c) (Baker's yeast).